We begin with the raw amino-acid sequence, 299 residues long: Nucleotide-binding protein AFE_3021 (299 aa).

11–18 (GLSGSGKS) is a binding site for ATP. GTP is bound at residue 62 to 65 (DVRN).

The protein belongs to the RapZ-like family.

Displays ATPase and GTPase activities. The chain is Nucleotide-binding protein AFE_3021 from Acidithiobacillus ferrooxidans (strain ATCC 23270 / DSM 14882 / CIP 104768 / NCIMB 8455) (Ferrobacillus ferrooxidans (strain ATCC 23270)).